The sequence spans 128 residues: Organic solute transporter subunit beta (128 aa).

Topologically, residues M1–D30 are extracellular. Residues A31–L53 form a helical membrane-spanning segment. Residues R54–S128 lie on the Cytoplasmic side of the membrane. Disordered regions lie at residues R61–D80 and P101–S128. Composition is skewed to basic and acidic residues over residues Q66–D80 and P101–S115. Position 116 is a phosphoserine (S116).

This sequence belongs to the OST-beta family. In terms of assembly, interacts with SLC51A. The Ost-alpha/Ost-beta complex is a heterodimer composed of alpha (SLC51A) and beta (SLC51B) subunit; induces the transport of SLC51A from the endoplasmic reticulum to the plasma membrane. Present at high level in ileum. In ileum, it is restricted to the apical domain on the mature villus enterocytes with little detectable expression in the goblet cells or crypt enterocytes (at protein level). Expressed in kidney but not in heart, brain, liver, spleen, embryo, lung, thymus, ovary nor testis.

The protein resides in the cell membrane. The enzyme catalyses taurocholate(out) = taurocholate(in). It catalyses the reaction tauroursodeoxycholate(out) = tauroursodeoxycholate(in). The catalysed reaction is glycoursodeoxycholate(out) = glycoursodeoxycholate(in). It carries out the reaction glycocholate(out) = glycocholate(in). The enzyme catalyses taurochenodeoxycholate(out) = taurochenodeoxycholate(in). It catalyses the reaction glycochenodeoxycholate(out) = glycochenodeoxycholate(in). The catalysed reaction is taurodeoxycholate(out) = taurodeoxycholate(in). It carries out the reaction glycodeoxycholate(out) = glycodeoxycholate(in). The enzyme catalyses prostaglandin E2(out) = prostaglandin E2(in). It catalyses the reaction estrone 3-sulfate(out) = estrone 3-sulfate(in). The catalysed reaction is dehydroepiandrosterone 3-sulfate(out) = dehydroepiandrosterone 3-sulfate(in). Its function is as follows. Essential component of the Ost-alpha/Ost-beta complex, a heterodimer that acts as the intestinal basolateral transporter responsible for bile acid export from enterocytes into portal blood. The Ost-alpha/Ost-beta complex efficiently transports the major species of bile acids (taurocholate). Taurine conjugates are transported more efficiently across the basolateral membrane than glycine-conjugated bile acids. Can also transport steroids such as estrone 3-sulfate and dehydroepiandrosterone 3-sulfate, therefore playing a role in the enterohepatic circulation of sterols. Able to transport eicosanoids such as prostaglandin E2. Modulates SLC51A glycosylation, membrane trafficking and stability activities. In Mus musculus (Mouse), this protein is Organic solute transporter subunit beta (Slc51b).